Here is a 283-residue protein sequence, read N- to C-terminus: Poly(3-hydroxyalkanoate) depolymerase (283 aa).

An AB hydrolase-1 domain is found at 30–253; that stretch reads PLLIFNGIGA…IDDGHLFLIT (224 aa). Serine 102 acts as the Charge relay system in catalysis.

This sequence belongs to the AB hydrolase superfamily. Lipase family.

Its function is as follows. Complements a mutant that does not degrade PHA; might be a lipase. This is Poly(3-hydroxyalkanoate) depolymerase from Ectopseudomonas oleovorans (Pseudomonas oleovorans).